Consider the following 46-residue polypeptide: Mu-segestritoxin-Sf1g (46 aa).

4 cysteine pairs are disulfide-bonded: Cys3–Cys19, Cys10–Cys22, Cys18–Cys42, and Cys24–Cys40. Positions 31–33 (RPW) are keys region for toxin activity.

Belongs to the neurotoxin 16 (SFI) family. As to expression, expressed by the venom gland.

It localises to the secreted. Its function is as follows. Insecticidal toxin. It inhibits insect voltage-gated sodium channels (Nav) by partially blocking the channel pore in DUM neurons from the American cockroach, not by acting as a gating modifier. The inhibition is only partially reversible after prolonged washout. In vivo, the toxin causes flaccid paralysis followed by death when injected into Heliothis virescens larvae. It also causes uncoordinated movements followed by full paralysis to sheep blowflies (Lucilia cuprina). When the toxin is fused to snowdrop lectin, it is orally active against larvae of the tomato moth (Laconobia oleracea), the rice brown planthopper (Nilaparvata lugens), and the peach-potato aphid (Myzus persicae). The protein is Mu-segestritoxin-Sf1g of Segestria florentina (Tube-web spider).